The following is a 93-amino-acid chain: Putative septation protein SpoVG (93 aa).

Belongs to the SpoVG family.

Could be involved in septation. The chain is Putative septation protein SpoVG from Fusobacterium nucleatum subsp. nucleatum (strain ATCC 25586 / DSM 15643 / BCRC 10681 / CIP 101130 / JCM 8532 / KCTC 2640 / LMG 13131 / VPI 4355).